A 123-amino-acid chain; its full sequence is Small ribosomal subunit protein uS12 (123 aa).

3-methylthioaspartic acid is present on aspartate 89.

Belongs to the universal ribosomal protein uS12 family. As to quaternary structure, part of the 30S ribosomal subunit. Contacts proteins S8 and S17. May interact with IF1 in the 30S initiation complex.

In terms of biological role, with S4 and S5 plays an important role in translational accuracy. Interacts with and stabilizes bases of the 16S rRNA that are involved in tRNA selection in the A site and with the mRNA backbone. Located at the interface of the 30S and 50S subunits, it traverses the body of the 30S subunit contacting proteins on the other side and probably holding the rRNA structure together. The combined cluster of proteins S8, S12 and S17 appears to hold together the shoulder and platform of the 30S subunit. This Rhodospirillum centenum (strain ATCC 51521 / SW) protein is Small ribosomal subunit protein uS12.